The primary structure comprises 154 residues: MKISIYATLAALSLALPAVAQEGDAAKGEKEFNKCKACHMVQAPDGTDIVKGGKTGPNLYGVVGRKIASVEGFKYGDGILEVAEKNPDMVWSEADLIEYVTDPKPWLVEKTGDSAAKTKMTFKLGKNQADVVAFLAQHSPDAGAEAAPAEGAAN.

A signal peptide spans 1–20 (MKISIYATLAALSLALPAVA). Position 21 is a pyrrolidone carboxylic acid (Gln21). Residues Cys35, Cys38, His39, and Met120 each contribute to the heme c site. The propeptide occupies 150–154 (EGAAN).

Post-translationally, binds 1 heme c group covalently per subunit.

This Paracoccus versutus (Thiobacillus versutus) protein is Cytochrome c-550 (cyc).